Consider the following 98-residue polypeptide: Defensin-like protein 68 (98 aa).

The signal sequence occupies residues 1–19; it reads MGSSKLLVALTLVVMITIS. Cystine bridges form between Cys-38–Cys-88, Cys-42–Cys-65, Cys-51–Cys-86, and Cys-55–Cys-87.

Belongs to the DEFL family.

It localises to the secreted. The sequence is that of Defensin-like protein 68 from Arabidopsis thaliana (Mouse-ear cress).